A 512-amino-acid polypeptide reads, in one-letter code: Histidine ammonia-lyase (512 aa).

Positions 146–148 (ASG) form a cross-link, 5-imidazolinone (Ala-Gly). Position 147 is a 2,3-didehydroalanine (Ser) (serine 147).

The protein belongs to the PAL/histidase family. Contains an active site 4-methylidene-imidazol-5-one (MIO), which is formed autocatalytically by cyclization and dehydration of residues Ala-Ser-Gly.

It is found in the cytoplasm. It carries out the reaction L-histidine = trans-urocanate + NH4(+). It functions in the pathway amino-acid degradation; L-histidine degradation into L-glutamate; N-formimidoyl-L-glutamate from L-histidine: step 1/3. In Paracidovorax citrulli (strain AAC00-1) (Acidovorax citrulli), this protein is Histidine ammonia-lyase.